The sequence spans 882 residues: Valine--tRNA ligase (882 aa).

Residues 45 to 55 (PNVTGKLHLGH) carry the 'HIGH' region motif. Positions 519–523 (KMSKS) match the 'KMSKS' region motif. Lysine 522 lines the ATP pocket. A coiled-coil region spans residues 808–882 (LADLLNVEEE…RIAEMKKIKS (75 aa)).

The protein belongs to the class-I aminoacyl-tRNA synthetase family. ValS type 1 subfamily. As to quaternary structure, monomer.

It localises to the cytoplasm. The enzyme catalyses tRNA(Val) + L-valine + ATP = L-valyl-tRNA(Val) + AMP + diphosphate. Functionally, catalyzes the attachment of valine to tRNA(Val). As ValRS can inadvertently accommodate and process structurally similar amino acids such as threonine, to avoid such errors, it has a 'posttransfer' editing activity that hydrolyzes mischarged Thr-tRNA(Val) in a tRNA-dependent manner. The polypeptide is Valine--tRNA ligase (Streptococcus pyogenes serotype M1).